The chain runs to 554 residues: U3 small nucleolar RNA-associated protein 7 (554 aa).

Basic residues predominate over residues 1–12 (MGHKKNGHRRQI). The disordered stretch occupies residues 1 to 39 (MGHKKNGHRRQIKERENQNKFERSTYTNNAKNNHTQTKD). Basic and acidic residues predominate over residues 13–23 (KERENQNKFER). The span at 24 to 35 (STYTNNAKNNHT) shows a compositional bias: polar residues. 4 WD repeats span residues 108 to 149 (LKEF…AELF), 230 to 269 (TKAG…PLVK), 272 to 311 (SARG…QLHS), and 314 to 351 (SLPT…SGDS). Residues 475–496 (NKAKTNSDIPDVKPDVKGKNSG) form a disordered region.

In terms of assembly, interacts with snoRNA U3. Interacts with MPP10. Component of the ribosomal small subunit (SSU) processome composed of at least 40 protein subunits and snoRNA U3.

Its subcellular location is the nucleus. The protein resides in the nucleolus. Functionally, involved in nucleolar processing of pre-18S ribosomal RNA. The polypeptide is U3 small nucleolar RNA-associated protein 7 (UTP7) (Saccharomyces cerevisiae (strain ATCC 204508 / S288c) (Baker's yeast)).